We begin with the raw amino-acid sequence, 279 residues long: Small ribosomal subunit protein uS2 (279 aa).

Belongs to the universal ribosomal protein uS2 family. Component of the small ribosomal subunit. Mature ribosomes consist of a small (40S) and a large (60S) subunit. The 40S subunit contains about 33 different proteins and 1 molecule of RNA (18S). The 60S subunit contains about 49 different proteins and 3 molecules of RNA (25S, 5.8S and 5S). Interacts with ribosomal protein S21.

It localises to the cytoplasm. Its function is as follows. Required for the assembly and/or stability of the 40S ribosomal subunit. Required for the processing of the 20S rRNA-precursor to mature 18S rRNA in a late step of the maturation of 40S ribosomal subunits. The protein is Small ribosomal subunit protein uS2 of Chlamydomonas reinhardtii (Chlamydomonas smithii).